A 322-amino-acid polypeptide reads, in one-letter code: MSKETKPKVVVIGGGTGLPVVLKGLKKKEIHLTAIVTVADDGGSSGKIREQMDVLPPGDIRNVMLALSNVDPRVVDLFQYRFAVDGDLSGHVIGNLILTALSQLNDSYVDAINVLATVLKIRGKVIPATDQPLILNAEMEDGSIVHGESLIPLQGKHINRVFIEPENVKPYPTAVEAVKEADLIVIGPGSLYTSILPNLLLEELAEEITASKAQKVYITNILTQIGETDFFSDADHIKVIHEHVGKSFIDKTLINTTTVPKELLFPEDVAQVEHNAEEMEKLGVEAIYQDFLSTEDGLVRHAADKVADALLAMLPNKNNEKE.

It belongs to the gluconeogenesis factor family.

The protein localises to the cytoplasm. Its function is as follows. Required for morphogenesis under gluconeogenic growth conditions. This chain is Gluconeogenesis factor, found in Listeria innocua serovar 6a (strain ATCC BAA-680 / CLIP 11262).